The chain runs to 436 residues: Nicotinate phosphoribosyltransferase (436 aa).

The residue at position 231 (histidine 231) is a Phosphohistidine; by autocatalysis.

Belongs to the NAPRTase family. In terms of processing, transiently phosphorylated on a His residue during the reaction cycle. Phosphorylation strongly increases the affinity for substrates and increases the rate of nicotinate D-ribonucleotide production. Dephosphorylation regenerates the low-affinity form of the enzyme, leading to product release.

The catalysed reaction is nicotinate + 5-phospho-alpha-D-ribose 1-diphosphate + ATP + H2O = nicotinate beta-D-ribonucleotide + ADP + phosphate + diphosphate. Its pathway is cofactor biosynthesis; NAD(+) biosynthesis; nicotinate D-ribonucleotide from nicotinate: step 1/1. Its function is as follows. Catalyzes the synthesis of beta-nicotinate D-ribonucleotide from nicotinate and 5-phospho-D-ribose 1-phosphate at the expense of ATP. The polypeptide is Nicotinate phosphoribosyltransferase (Vibrio campbellii (strain ATCC BAA-1116)).